Consider the following 167-residue polypeptide: Ribosome-binding factor A (167 aa).

The tract at residues 127–167 is disordered; it reads SRANAQYAGDADPYKHDEPDDDDFDDDDDVEVEDWDDDDEA. Residues 145–167 are compositionally biased toward acidic residues; sequence PDDDDFDDDDDVEVEDWDDDDEA.

It belongs to the RbfA family. As to quaternary structure, monomer. Binds 30S ribosomal subunits, but not 50S ribosomal subunits or 70S ribosomes.

The protein resides in the cytoplasm. One of several proteins that assist in the late maturation steps of the functional core of the 30S ribosomal subunit. Associates with free 30S ribosomal subunits (but not with 30S subunits that are part of 70S ribosomes or polysomes). Required for efficient processing of 16S rRNA. May interact with the 5'-terminal helix region of 16S rRNA. In Bifidobacterium adolescentis (strain ATCC 15703 / DSM 20083 / NCTC 11814 / E194a), this protein is Ribosome-binding factor A.